The primary structure comprises 92 residues: MARSLKKGPFADPHLLKKIEAQVDSEKKSVIKTWSRRSTIFPSFIGFTIAVYDGRKHVPVYVQEDMVGHKLGEFVPTRTFKGHKNDDKKTGK.

The protein belongs to the universal ribosomal protein uS19 family.

Functionally, protein S19 forms a complex with S13 that binds strongly to the 16S ribosomal RNA. The chain is Small ribosomal subunit protein uS19 from Leuconostoc mesenteroides subsp. mesenteroides (strain ATCC 8293 / DSM 20343 / BCRC 11652 / CCM 1803 / JCM 6124 / NCDO 523 / NBRC 100496 / NCIMB 8023 / NCTC 12954 / NRRL B-1118 / 37Y).